The primary structure comprises 618 residues: Vacuolar-sorting receptor 5 (618 aa).

The N-terminal stretch at 1-23 (MSPSNKGTVLALILALTMVVVNG) is a signal peptide. The Lumenal portion of the chain corresponds to 24–563 (FSSRFFVEKS…IERRSGSRSR (540 aa)). Positions 58 to 164 (KYGGFMIGSV…SFGDSLKKAL (107 aa)) constitute a PA domain. N-linked (GlcNAc...) asparagine glycans are attached at residues Asn-81, Asn-293, and Asn-430. 2 EGF-like domains span residues 412–462 (ETNE…TSCK) and 465–511 (GPAR…LKCE). 7 cysteine pairs are disulfide-bonded: Cys-416-Cys-434, Cys-423-Cys-443, Cys-445-Cys-461, Cys-469-Cys-489, Cys-476-Cys-497, Cys-499-Cys-510, and Cys-540-Cys-553. Positions 512–554 (DIDECKEKSACKCDGCKCKNNWGGYECKCSNNSIYMKEEDTCI) constitute an EGF-like 3; calcium-binding domain. Asn-542 carries an N-linked (GlcNAc...) asparagine glycan. A helical transmembrane segment spans residues 564 to 584 (GLFTIVVLTAIAGISLGAYIF). The Cytoplasmic segment spans residues 585 to 618 (YKYHLQSYMDSEIVSIMSQYIPLDSQSINQDSFK). Positions 604-607 (YIPL) match the Tyrosine-based internalization motif motif.

Belongs to the VSR (BP-80) family. As to expression, expressed in seedlings, roots, leaves, flowers and siliques.

It localises to the membrane. The protein localises to the golgi apparatus membrane. It is found in the cytoplasmic vesicle. The protein resides in the clathrin-coated vesicle membrane. Its subcellular location is the prevacuolar compartment membrane. Vacuolar-sorting receptor (VSR) involved in clathrin-coated vesicles sorting from Golgi apparatus to vacuoles. The chain is Vacuolar-sorting receptor 5 (VSR5) from Arabidopsis thaliana (Mouse-ear cress).